Reading from the N-terminus, the 91-residue chain is DNA-directed RNA polymerase subunit omega (91 aa).

The protein belongs to the RNA polymerase subunit omega family. The RNAP catalytic core consists of 2 alpha, 1 beta, 1 beta' and 1 omega subunit. When a sigma factor is associated with the core the holoenzyme is formed, which can initiate transcription.

It carries out the reaction RNA(n) + a ribonucleoside 5'-triphosphate = RNA(n+1) + diphosphate. Promotes RNA polymerase assembly. Latches the N- and C-terminal regions of the beta' subunit thereby facilitating its interaction with the beta and alpha subunits. In Yersinia pestis bv. Antiqua (strain Antiqua), this protein is DNA-directed RNA polymerase subunit omega.